The primary structure comprises 62 residues: Photosystem II reaction center protein Z (62 aa).

2 consecutive transmembrane segments (helical) span residues 8–28 (AVFA…VVFA) and 41–61 (FSGT…NSLI).

The protein belongs to the PsbZ family. As to quaternary structure, PSII is composed of 1 copy each of membrane proteins PsbA, PsbB, PsbC, PsbD, PsbE, PsbF, PsbH, PsbI, PsbJ, PsbK, PsbL, PsbM, PsbT, PsbY, PsbZ, Psb30/Ycf12, at least 3 peripheral proteins of the oxygen-evolving complex and a large number of cofactors. It forms dimeric complexes.

The protein resides in the plastid. It is found in the chloroplast thylakoid membrane. May control the interaction of photosystem II (PSII) cores with the light-harvesting antenna, regulates electron flow through the 2 photosystem reaction centers. PSII is a light-driven water plastoquinone oxidoreductase, using light energy to abstract electrons from H(2)O, generating a proton gradient subsequently used for ATP formation. In Daucus carota (Wild carrot), this protein is Photosystem II reaction center protein Z.